The primary structure comprises 205 residues: Small ribosomal subunit protein uS4 (205 aa).

Positions 94 to 157 constitute an S4 RNA-binding domain; the sequence is SRLDTVVYRM…KQIALIQESI (64 aa).

This sequence belongs to the universal ribosomal protein uS4 family. Part of the 30S ribosomal subunit. Contacts protein S5. The interaction surface between S4 and S5 is involved in control of translational fidelity.

Functionally, one of the primary rRNA binding proteins, it binds directly to 16S rRNA where it nucleates assembly of the body of the 30S subunit. In terms of biological role, with S5 and S12 plays an important role in translational accuracy. This Rickettsia canadensis (strain McKiel) protein is Small ribosomal subunit protein uS4.